A 179-amino-acid chain; its full sequence is Isopentenyl-diphosphate Delta-isomerase (179 aa).

Residues His-25 and His-31 each contribute to the Mn(2+) site. The Nudix hydrolase domain maps to 29–161; the sequence is ELHRAITVYI…PEQFTAWFQL (133 aa). Cys-66 is an active-site residue. Position 66 (Cys-66) interacts with Mg(2+). His-68 is a binding site for Mn(2+). Glu-86 is a binding site for Mg(2+). Residues Glu-111 and Glu-113 each contribute to the Mn(2+) site. Residue Glu-113 is part of the active site.

It belongs to the IPP isomerase type 1 family. Homodimer. Requires Mg(2+) as cofactor. Mn(2+) serves as cofactor.

The protein resides in the cytoplasm. The catalysed reaction is isopentenyl diphosphate = dimethylallyl diphosphate. The protein operates within isoprenoid biosynthesis; dimethylallyl diphosphate biosynthesis; dimethylallyl diphosphate from isopentenyl diphosphate: step 1/1. Its function is as follows. Catalyzes the 1,3-allylic rearrangement of the homoallylic substrate isopentenyl (IPP) to its highly electrophilic allylic isomer, dimethylallyl diphosphate (DMAPP). This is Isopentenyl-diphosphate Delta-isomerase from Pectobacterium atrosepticum (strain SCRI 1043 / ATCC BAA-672) (Erwinia carotovora subsp. atroseptica).